We begin with the raw amino-acid sequence, 521 residues long: Myocyte-specific enhancer factor 2D (521 aa).

Positions 3–57 (RKKIQIQRITDERNRQVTFTKRKFGLMKKAYELSVLCDCEIALIIFNHSNKLFQY) constitute an MADS-box domain. Positions 58–86 (ASTDMDKVLLKYTEYNEPHESRTNADIIE) form a DNA-binding region, mef2-type. Phosphoserine occurs at positions 98, 106, and 110. Serine 121 carries the post-translational modification Phosphoserine; by PKA. The segment at 174 to 207 (TDPRLLSPQQPALQRNSVSPGLPQRPASAGAMLG) is disordered. Serine 180 carries the phosphoserine; by MAPK7 modification. Positions 180–192 (SPQQPALQRNSVS) are enriched in polar residues. Phosphoserine; by PKA is present on serine 190. The residue at position 231 (serine 231) is a Phosphoserine. Residues 244-266 (NKVIPAKSPPPPTHSTQLGAPSR) are disordered. Lysine 245 is subject to N6-acetyllysine. Position 251 is a phosphoserine (serine 251). Positions 286–292 (TEDHLDL) are beta domain. 2 disordered regions span residues 357 to 407 (SLGN…QSHL) and 437 to 521 (SIKS…WTLK). The segment covering 373–400 (PQQPQPPQQQPPQPQQPQPQQPQQPQQP) has biased composition (pro residues). Residue lysine 439 is modified to N6-acetyllysine; alternate. Lysine 439 is covalently cross-linked (Glycyl lysine isopeptide (Lys-Gly) (interchain with G-Cter in SUMO); alternate). A Phosphoserine modification is found at serine 444.

It belongs to the MEF2 family. Interacts with MYOG. Forms a complex with class II HDACs in undifferentiating cells. On myogenic differentiation, HDACs are released into the cytoplasm allowing MEF2s to interact with other proteins for activation. Interacts with HDAC4 (in undifferentiating cells); the interaction translocates MEF2D to nuclear dots. Forms a heterodimer with MEF2A. Interacts with MAPK7; the interaction phosphorylates but does not activate MEF2D. Interacts with CCAR2 and HDAC3. Post-translationally, phosphorylated on Ser-444 by CDK5 is required for Lys-439 sumoylation and inhibits transcriptional activity. In neurons, enhanced CDK5 activity induced by neurotoxins promotes caspase 3-mediated cleavage leading to neuron apoptosis. Phosphorylation on Ser-180 can be enhanced by EGF. Phosphorylated and activated by CaMK4. Acetylated on Lys-439 by CREBBP. Acetylated by EP300. Deacetylated by SIRT1 and HDAC3. In terms of processing, sumoylated on Lys-439 with SUMO2 but not SUMO1; which inhibits transcriptional activity and myogenic activity. Desumoylated by SENP3. Post-translationally, proteolytically cleaved in cerebellar granule neurons on several sites by caspase 7 following neurotoxicity. Preferentially cleaves the CDK5-mediated hyperphosphorylated form which leads to neuron apoptosis and transcriptional inactivation.

Its subcellular location is the nucleus. Functionally, transcriptional activator which binds specifically to the MEF2 element, 5'-YTA[AT](4)TAR-3', found in numerous muscle-specific, growth factor- and stress-induced genes. Mediates cellular functions not only in skeletal and cardiac muscle development, but also in neuronal differentiation and survival. Plays diverse roles in the control of cell growth, survival and apoptosis via p38 MAPK signaling in muscle-specific and/or growth factor-related transcription. Plays a critical role in the regulation of neuronal apoptosis. The polypeptide is Myocyte-specific enhancer factor 2D (MEF2D) (Homo sapiens (Human)).